A 333-amino-acid polypeptide reads, in one-letter code: Serine racemase (333 aa).

Position 13 (Glu13) interacts with Mg(2+). The ATP site is built by Ser31, Ser32, Ile33, Lys51, and Thr52. The Proton acceptor role is filled by Lys56. The residue at position 56 (Lys56) is an N6-(pyridoxal phosphate)lysine. Pro69 is a Ca(2+) binding site. Residue Thr71 is modified to Phosphothreonine. Thr81 lines the Ca(2+) pocket. The active-site Proton acceptor is the Ser84. Asn86 is a binding site for pyridoxal 5'-phosphate. Gln89 lines the ATP pocket. Position 113 is an S-nitrosocysteine (Cys113). Tyr121 contributes to the ATP binding site. Asn154 is a pyridoxal 5'-phosphate binding site. Residue Asp178 coordinates Mg(2+). 5 residues coordinate pyridoxal 5'-phosphate: Gly185, Gly186, Gly187, Gly188, and Met189. Glu210, Ala214, Asp216, and Asn247 together coordinate Mg(2+). Glu210, Ala214, Asp216, and Asn247 together coordinate Ca(2+). Positions 210, 214, and 216 each coordinate Mn(2+). ATP is bound at residue Lys279. Ser313 lines the pyridoxal 5'-phosphate pocket. An ATP-binding site is contributed by Asn316.

It belongs to the serine/threonine dehydratase family. In terms of assembly, homodimer. Mg(2+) serves as cofactor. It depends on Mn(2+) as a cofactor. The cofactor is Ca(2+). Requires pyridoxal 5'-phosphate as cofactor. Post-translationally, S-nitrosylated, leading to decrease the enzyme activity. In terms of tissue distribution, expressed in the cerebellum and frontal cortex (at protein level).

It catalyses the reaction L-serine = D-serine. It carries out the reaction D-serine = pyruvate + NH4(+). The catalysed reaction is L-serine = pyruvate + NH4(+). With respect to regulation, allosterically activated by magnesium, and possibly also other divalent metal cations. Allosterically activated by ATP, ADP or GTP. Competitively inhibited by malonate. Functionally, catalyzes the synthesis of D-serine from L-serine. D-serine is a key coagonist with glutamate at NMDA receptors. Has dehydratase activity towards both L-serine and D-serine. The protein is Serine racemase (Srr) of Rattus norvegicus (Rat).